We begin with the raw amino-acid sequence, 368 residues long: Polymerase delta-interacting protein 2 (368 aa).

The N-terminal 21 residues, 1–21, are a transit peptide targeting the mitochondrion; that stretch reads MAGCVARRALAVGSRWWSRSL. Positions 235 to 360 constitute an ApaG domain; sequence RETTENIRVT…FSLESNKDEK (126 aa). Threonine 292 carries the phosphothreonine modification.

In terms of assembly, interacts with PCNA and POLD2. Interacts with SSBP1. Interacts with PRIMPOL; leading to enhance DNA polymerase activity of PRIMPOL. Interacts with POLH. Interacts with POLD1; leading to stimulate DNA polymerase activity of POLD1.

The protein localises to the mitochondrion matrix. The protein resides in the nucleus. In terms of biological role, involved in DNA damage tolerance by regulating translesion synthesis (TLS) of templates carrying DNA damage lesions such as 8oxoG and abasic sites. May act by stimulating activity of DNA polymerases involved in TLS, such as PRIMPOL and polymerase delta (POLD1). The sequence is that of Polymerase delta-interacting protein 2 from Mus musculus (Mouse).